We begin with the raw amino-acid sequence, 274 residues long: Formamidopyrimidine-DNA glycosylase (274 aa).

Residue P2 is the Schiff-base intermediate with DNA of the active site. E3 serves as the catalytic Proton donor. Residue K59 is the Proton donor; for beta-elimination activity of the active site. DNA-binding residues include H93, R112, and R155. The FPG-type zinc-finger motif lies at 240 to 274 (QVYGRTGRPCPRCGQPLERVRLGGRSTHFCPRCQV). The active-site Proton donor; for delta-elimination activity is R264.

The protein belongs to the FPG family. As to quaternary structure, monomer. Zn(2+) is required as a cofactor.

The catalysed reaction is Hydrolysis of DNA containing ring-opened 7-methylguanine residues, releasing 2,6-diamino-4-hydroxy-5-(N-methyl)formamidopyrimidine.. It catalyses the reaction 2'-deoxyribonucleotide-(2'-deoxyribose 5'-phosphate)-2'-deoxyribonucleotide-DNA = a 3'-end 2'-deoxyribonucleotide-(2,3-dehydro-2,3-deoxyribose 5'-phosphate)-DNA + a 5'-end 5'-phospho-2'-deoxyribonucleoside-DNA + H(+). Functionally, involved in base excision repair of DNA damaged by oxidation or by mutagenic agents. Acts as a DNA glycosylase that recognizes and removes damaged bases. Has a preference for oxidized purines, such as 7,8-dihydro-8-oxoguanine (8-oxoG). Has AP (apurinic/apyrimidinic) lyase activity and introduces nicks in the DNA strand. Cleaves the DNA backbone by beta-delta elimination to generate a single-strand break at the site of the removed base with both 3'- and 5'-phosphates. This Moorella thermoacetica (strain ATCC 39073 / JCM 9320) protein is Formamidopyrimidine-DNA glycosylase.